The primary structure comprises 187 residues: Large ribosomal subunit protein eL18B (187 aa).

Phosphothreonine is present on Thr-134. The residue at position 136 (Ser-136) is a Phosphoserine.

Belongs to the eukaryotic ribosomal protein eL18 family. As to quaternary structure, component of the large ribosomal subunit (LSU). Mature yeast ribosomes consist of a small (40S) and a large (60S) subunit. The 40S small subunit contains 1 molecule of ribosomal RNA (18S rRNA) and at least 33 different proteins. The large 60S subunit contains 3 rRNA molecules (25S, 5.8S and 5S rRNA) and at least 46 different proteins. eL18 interacts with NAP1.

Its subcellular location is the cytoplasm. In terms of biological role, component of the ribosome, a large ribonucleoprotein complex responsible for the synthesis of proteins in the cell. The small ribosomal subunit (SSU) binds messenger RNAs (mRNAs) and translates the encoded message by selecting cognate aminoacyl-transfer RNA (tRNA) molecules. The large subunit (LSU) contains the ribosomal catalytic site termed the peptidyl transferase center (PTC), which catalyzes the formation of peptide bonds, thereby polymerizing the amino acids delivered by tRNAs into a polypeptide chain. The nascent polypeptides leave the ribosome through a tunnel in the LSU and interact with protein factors that function in enzymatic processing, targeting, and the membrane insertion of nascent chains at the exit of the ribosomal tunnel. This is Large ribosomal subunit protein eL18B (rpl1802) from Schizosaccharomyces pombe (strain 972 / ATCC 24843) (Fission yeast).